The following is a 993-amino-acid chain: MASADDYFSDFEDDELDKLYEKAINKSVKETITRRAVPVQKDLHDNVLPGQKTVYEEIQRDVSFGPTHHELDYDALSFYVYPTNYEVRDYQYTIVHKSLFQNTLCAIPTGMGKTFIASTVMLNYFRWTKKAKIIFTAPTRPLVAQQIKACLGITGIPSDQTAILLDKSRKNREEIWANKRVFFATPQVVENDLKRGVLDPKDIVCLVIDEAHRATGSYAYTNVVKFIDRFNSSYRLLALTATPASDLEGVQEVVNNLDISKIEIRTEESMDIVKYMKKRKKEKIEVPLLLEIEDIIEQLGIAVKPVLQQAIELGIYEECDPSQINAFKAMQQSQKIIANPTIPEGIKWRNFFILQLLNNVGQMLKRLKIYGIRTFFNYFQNKCTEFTTKYNLKKSTNKIAAEFYYHPILKNIKNQCENYLSDPKFVGHGKLQCVRDELMEFFQKRGSDSRVIIFTELRESALEIVKFIDSVANDQIRPHIFIGQARAKEGFDEVKYTRKHAPKGRKKVERLHRQEQEKFLEAERTKRAANDKLERSARRTGSSEEAQISGMNQKMQKEVIHNFKKGEYNVLVCTSIGEEGLDIGEVDLIICYDTTSSPIKNIQRMGRTGRKRDGKIVLLFSSNESYKFERAMEDYSTLQALISKQCIDYKKSDRIIPEDIIPECHETLITINDENEIINEMEDVDEVIRYATQCMMGKKVKPKKAITKKKRVQENKKPKKFFMPDNVETSIVSASTLINKFLVNESGGKQLVTSNENPSKKRKIFKALDNLENDSTEEASSSLETEDEEFSDDNNVFIAEGQNGCQKDLETAIIRTGESLTTLKPLHNFERPNMALFVNDCGLPTKIEKNVKDIRGNQHNLEKEKNCTVDKNNMVLSLDDWNFFRDRYIPEGVSFDVEPNFVQYTKGVKVPHCHKVSKIITLFNDESNDNKKRTIDMNYTKCLARGMLRDEKKFVKVNDKSQVDNNSVNHDSSQSFTLSNAELDDILGSDSDF.

Residues 94–261 (IVHKSLFQNT…EVVNNLDISK (168 aa)) form the Helicase ATP-binding domain. 107 to 114 (IPTGMGKT) contacts ATP. The DEAH box motif lies at 209 to 212 (DEAH). One can recognise a Helicase C-terminal domain in the interval 507-655 (KVERLHRQEQ…CIDYKKSDRI (149 aa)). The disordered stretch occupies residues 530–551 (NDKLERSARRTGSSEEAQISGM). The span at 539 to 551 (RTGSSEEAQISGM) shows a compositional bias: polar residues.

The protein belongs to the DEAD box helicase family. DEAH subfamily. FANCM sub-subfamily. In terms of assembly, interacts with the MHF histone-fold complex to form the FANCM-MHF complex.

The protein localises to the nucleus. It carries out the reaction ATP + H2O = ADP + phosphate + H(+). Functionally, ATP-dependent DNA helicase involved in DNA damage repair by homologous recombination and in genome maintenance. Capable of unwinding D-loops. Plays a role in limiting crossover recombinants during mitotic DNA double-strand break (DSB) repair. Component of a FANCM-MHF complex which promotes gene conversion at blocked replication forks, probably by reversal of the stalled fork. This chain is ATP-dependent DNA helicase MPH1, found in Saccharomyces cerevisiae (strain YJM789) (Baker's yeast).